The following is a 331-amino-acid chain: Ferredoxin--NADP reductase (331 aa).

FAD contacts are provided by Thr-14, Glu-33, Gln-41, Tyr-46, Val-86, Phe-120, Asp-284, and Ser-327.

Belongs to the ferredoxin--NADP reductase type 2 family. Homodimer. It depends on FAD as a cofactor.

The enzyme catalyses 2 reduced [2Fe-2S]-[ferredoxin] + NADP(+) + H(+) = 2 oxidized [2Fe-2S]-[ferredoxin] + NADPH. This chain is Ferredoxin--NADP reductase, found in Picrophilus torridus (strain ATCC 700027 / DSM 9790 / JCM 10055 / NBRC 100828 / KAW 2/3).